Reading from the N-terminus, the 244-residue chain is Transmembrane protein 176A (244 aa).

Ser42 bears the Phosphoserine mark. 4 consecutive transmembrane segments (helical) span residues 60 to 80 (VLVASWVVQTVLGALSVVLGG), 92 to 112 (SEGAPFWTGIVAMLAGAVAFL), 122 to 142 (ALMRTLLVLASFCTAVAAIVI), and 204 to 224 (LLGIWVLLLLASLTPVCVYIW).

This sequence belongs to the TMEM176 family. Interacts with MCOLN2. Specifically expressed in lung, kidney and spleen.

It localises to the membrane. This chain is Transmembrane protein 176A (Tmem176a), found in Mus musculus (Mouse).